Consider the following 206-residue polypeptide: Thiamine-phosphate synthase (206 aa).

4-amino-2-methyl-5-(diphosphooxymethyl)pyrimidine contacts are provided by residues 36–40 and Asn-68; that span reads QLRAK. Asp-69 and Asp-88 together coordinate Mg(2+). Ser-105 is a 4-amino-2-methyl-5-(diphosphooxymethyl)pyrimidine binding site. Residue 131–133 coordinates 2-[(2R,5Z)-2-carboxy-4-methylthiazol-5(2H)-ylidene]ethyl phosphate; sequence TPT. Lys-134 serves as a coordination point for 4-amino-2-methyl-5-(diphosphooxymethyl)pyrimidine. Gly-162 is a 2-[(2R,5Z)-2-carboxy-4-methylthiazol-5(2H)-ylidene]ethyl phosphate binding site.

It belongs to the thiamine-phosphate synthase family. Requires Mg(2+) as cofactor.

It catalyses the reaction 2-[(2R,5Z)-2-carboxy-4-methylthiazol-5(2H)-ylidene]ethyl phosphate + 4-amino-2-methyl-5-(diphosphooxymethyl)pyrimidine + 2 H(+) = thiamine phosphate + CO2 + diphosphate. It carries out the reaction 2-(2-carboxy-4-methylthiazol-5-yl)ethyl phosphate + 4-amino-2-methyl-5-(diphosphooxymethyl)pyrimidine + 2 H(+) = thiamine phosphate + CO2 + diphosphate. The catalysed reaction is 4-methyl-5-(2-phosphooxyethyl)-thiazole + 4-amino-2-methyl-5-(diphosphooxymethyl)pyrimidine + H(+) = thiamine phosphate + diphosphate. It functions in the pathway cofactor biosynthesis; thiamine diphosphate biosynthesis; thiamine phosphate from 4-amino-2-methyl-5-diphosphomethylpyrimidine and 4-methyl-5-(2-phosphoethyl)-thiazole: step 1/1. In terms of biological role, condenses 4-methyl-5-(beta-hydroxyethyl)thiazole monophosphate (THZ-P) and 2-methyl-4-amino-5-hydroxymethyl pyrimidine pyrophosphate (HMP-PP) to form thiamine monophosphate (TMP). This is Thiamine-phosphate synthase from Thermus thermophilus (strain ATCC BAA-163 / DSM 7039 / HB27).